We begin with the raw amino-acid sequence, 88 residues long: Elongation factor 1-beta (88 aa).

It belongs to the EF-1-beta/EF-1-delta family.

Functionally, promotes the exchange of GDP for GTP in EF-1-alpha/GDP, thus allowing the regeneration of EF-1-alpha/GTP that could then be used to form the ternary complex EF-1-alpha/GTP/AAtRNA. The polypeptide is Elongation factor 1-beta (Halorubrum lacusprofundi (strain ATCC 49239 / DSM 5036 / JCM 8891 / ACAM 34)).